A 221-amino-acid polypeptide reads, in one-letter code: MKLRAVVLGLATLCTSTATFAGMVSTSSNLEFLAIDGQKASKSLGKAKTFTVDDTQSHQVVVRLNEIVGSGSNQSLFESNPVIVTFQGNAEDLVISAPAIRNLDSGDKFNQMPNITVKTKSGNAISAKVDVLKQEGLFPSGNVLNDLAEYNASGAVASVSKFTATTSANSMVAAPAGNAKANKGKVVVQGENVAEQQLQYWFQQADKETQTRFLNWAKSHK.

Positions 1-21 (MKLRAVVLGLATLCTSTATFA) are cleaved as a signal peptide.

This sequence belongs to the UPF0319 family.

This chain is UPF0319 protein CGSHiGG_02140, found in Haemophilus influenzae (strain PittGG).